The primary structure comprises 236 residues: Purine nucleoside phosphorylase DeoD-type (236 aa).

A purine D-ribonucleoside is bound at residue H4. Residues G20, R24, R43, and 87–90 (RVGT) contribute to the phosphate site. A purine D-ribonucleoside is bound by residues 179 to 181 (EME) and 203 to 204 (SD). D204 functions as the Proton donor in the catalytic mechanism.

The protein belongs to the PNP/UDP phosphorylase family. In terms of assembly, homohexamer; trimer of homodimers.

The catalysed reaction is a purine D-ribonucleoside + phosphate = a purine nucleobase + alpha-D-ribose 1-phosphate. The enzyme catalyses a purine 2'-deoxy-D-ribonucleoside + phosphate = a purine nucleobase + 2-deoxy-alpha-D-ribose 1-phosphate. In terms of biological role, catalyzes the reversible phosphorolytic breakdown of the N-glycosidic bond in the beta-(deoxy)ribonucleoside molecules, with the formation of the corresponding free purine bases and pentose-1-phosphate. The polypeptide is Purine nucleoside phosphorylase DeoD-type (Streptococcus thermophilus (strain ATCC BAA-491 / LMD-9)).